A 96-amino-acid chain; its full sequence is Ferredoxin (96 aa).

The 91-residue stretch at 4–94 folds into the 2Fe-2S ferredoxin-type domain; it reads YKVKLLTPEG…DVVIETHKEE (91 aa). [2Fe-2S] cluster contacts are provided by Cys40, Cys45, Cys48, and Cys78.

The protein belongs to the 2Fe2S plant-type ferredoxin family. The cofactor is [2Fe-2S] cluster.

The protein resides in the plastid. The protein localises to the chloroplast. In terms of biological role, ferredoxins are iron-sulfur proteins that transfer electrons in a wide variety of metabolic reactions. In Panax ginseng (Korean ginseng), this protein is Ferredoxin.